A 1226-amino-acid polypeptide reads, in one-letter code: DNA-directed RNA polymerase subunit beta'' (1226 aa).

Residues cysteine 223, cysteine 297, cysteine 304, and cysteine 307 each contribute to the Zn(2+) site.

This sequence belongs to the RNA polymerase beta' chain family. RpoC2 subfamily. In plastids the minimal PEP RNA polymerase catalytic core is composed of four subunits: alpha, beta, beta', and beta''. When a (nuclear-encoded) sigma factor is associated with the core the holoenzyme is formed, which can initiate transcription. It depends on Zn(2+) as a cofactor.

The protein localises to the plastid. It is found in the chloroplast. It catalyses the reaction RNA(n) + a ribonucleoside 5'-triphosphate = RNA(n+1) + diphosphate. DNA-dependent RNA polymerase catalyzes the transcription of DNA into RNA using the four ribonucleoside triphosphates as substrates. This is DNA-directed RNA polymerase subunit beta'' from Pyropia yezoensis (Susabi-nori).